The chain runs to 104 residues: uncharacterized protein (104 aa).

This is an uncharacterized protein from Pasteurella multocida (strain Pm70).